A 352-amino-acid chain; its full sequence is Neutral protease 2 homolog ATEG_04941 (352 aa).

The N-terminal stretch at 1-19 (MRFTALATAILPLACNVLA) is a signal peptide. Residues 20 to 175 (LPAKTGEAPK…ASAVKPLDKR (156 aa)) constitute a propeptide that is removed on maturation. 2 cysteine pairs are disulfide-bonded: C181–C253 and C260–C278. H303 contributes to the Zn(2+) binding site. Residue E304 is part of the active site. 2 residues coordinate Zn(2+): H307 and D318.

It belongs to the peptidase M35 family. Zn(2+) serves as cofactor.

The protein localises to the secreted. It catalyses the reaction Preferential cleavage of bonds with hydrophobic residues in P1'. Also 3-Asn-|-Gln-4 and 8-Gly-|-Ser-9 bonds in insulin B chain.. Functionally, secreted metalloproteinase that allows assimilation of proteinaceous substrates. Shows high activities on basic nuclear substrates such as histone and protamine. The sequence is that of Neutral protease 2 homolog ATEG_04941 from Aspergillus terreus (strain NIH 2624 / FGSC A1156).